The following is a 177-amino-acid chain: Probable chemoreceptor glutamine deamidase CheD (177 aa).

The protein belongs to the CheD family.

It catalyses the reaction L-glutaminyl-[protein] + H2O = L-glutamyl-[protein] + NH4(+). In terms of biological role, probably deamidates glutamine residues to glutamate on methyl-accepting chemotaxis receptors (MCPs), playing an important role in chemotaxis. The chain is Probable chemoreceptor glutamine deamidase CheD from Pseudomonas syringae pv. syringae (strain B728a).